Here is a 271-residue protein sequence, read N- to C-terminus: Dermonecrotic toxin SpeSicTox-betaIF1 (271 aa).

The active site involves histidine 3. Mg(2+) is bound by residues glutamate 23 and aspartate 25. Histidine 39 serves as the catalytic Nucleophile. 2 disulfides stabilise this stretch: cysteine 43–cysteine 49 and cysteine 45–cysteine 188. Aspartate 83 is a Mg(2+) binding site.

This sequence belongs to the arthropod phospholipase D family. Class II subfamily. Mg(2+) is required as a cofactor. In terms of tissue distribution, expressed by the venom gland.

The protein resides in the secreted. The enzyme catalyses an N-(acyl)-sphingosylphosphocholine = an N-(acyl)-sphingosyl-1,3-cyclic phosphate + choline. It carries out the reaction an N-(acyl)-sphingosylphosphoethanolamine = an N-(acyl)-sphingosyl-1,3-cyclic phosphate + ethanolamine. It catalyses the reaction a 1-acyl-sn-glycero-3-phosphocholine = a 1-acyl-sn-glycero-2,3-cyclic phosphate + choline. The catalysed reaction is a 1-acyl-sn-glycero-3-phosphoethanolamine = a 1-acyl-sn-glycero-2,3-cyclic phosphate + ethanolamine. In terms of biological role, dermonecrotic toxins cleave the phosphodiester linkage between the phosphate and headgroup of certain phospholipids (sphingolipid and lysolipid substrates), forming an alcohol (often choline) and a cyclic phosphate. This toxin acts on sphingomyelin (SM). It may also act on ceramide phosphoethanolamine (CPE), lysophosphatidylcholine (LPC) and lysophosphatidylethanolamine (LPE), but not on lysophosphatidylserine (LPS), and lysophosphatidylglycerol (LPG). It acts by transphosphatidylation, releasing exclusively cyclic phosphate products as second products. Induces dermonecrosis, hemolysis, increased vascular permeability, edema, inflammatory response, and platelet aggregation. The protein is Dermonecrotic toxin SpeSicTox-betaIF1 of Sicarius peruensis (Six-eyed sand spider).